The sequence spans 232 residues: Very-long-chain (3R)-3-hydroxyacyl-CoA dehydratase 4 (232 aa).

The Cytoplasmic portion of the chain corresponds to 1–19 (MGPLALPAWLQPRYRKNAY). The helical transmembrane segment at 20-40 (LFIYYLIQFCGHSWIFTNMTV) threads the bilayer. Over 41–56 (RFFSFGKDSMVDTFYA) the chain is Lumenal. The chain crosses the membrane as a helical span at residues 57–77 (IGLVMRLCQSVSLLELLHIYV). Residues 78-112 (GIESNHLLPRFLQLTERIIILFVVITSQEEVQEKY) lie on the Cytoplasmic side of the membrane. Residues 113-133 (VVCVLFVFWNLLDMVRYTYSM) traverse the membrane as a helical segment. Topologically, residues 134–135 (LS) are lumenal. The helical transmembrane segment at 136–156 (VIGISYAVLTWLSQTLWMPIY) threads the bilayer. Residue Y156 is part of the active site. Residue P157 is a topological domain, cytoplasmic. Residues 158–178 (LCVLAEAFAIYQSLPYFESFG) traverse the membrane as a helical segment. The active site involves E163. Over 179–189 (TYSTKLPFDLS) the chain is Lumenal. Residues 190 to 210 (IYFPYVLKIYLMMLFIGMYFT) form a helical membrane-spanning segment. Residues 211–232 (YSHLYSERRDILGIFPIKKKKM) are Cytoplasmic-facing.

This sequence belongs to the very long-chain fatty acids dehydratase HACD family. May interact with enzymes of the ELO family (including ELOVL1); with those enzymes that mediate condensation, the first of the four steps of the reaction cycle responsible for fatty acids elongation, may be part of a larger fatty acids elongase complex. In terms of tissue distribution, highly expressed in leukocytes, and low expression in heart, spleen, kidney, and placenta.

It localises to the endoplasmic reticulum membrane. The enzyme catalyses a very-long-chain (3R)-3-hydroxyacyl-CoA = a very-long-chain (2E)-enoyl-CoA + H2O. The catalysed reaction is (3R)-hydroxyhexadecanoyl-CoA = (2E)-hexadecenoyl-CoA + H2O. The protein operates within lipid metabolism; fatty acid biosynthesis. Catalyzes the third of the four reactions of the long-chain fatty acids elongation cycle. This endoplasmic reticulum-bound enzymatic process, allows the addition of two carbons to the chain of long- and very long-chain fatty acids/VLCFAs per cycle. This enzyme catalyzes the dehydration of the 3-hydroxyacyl-CoA intermediate into trans-2,3-enoyl-CoA, within each cycle of fatty acid elongation. Thereby, it participates in the production of VLCFAs of different chain lengths that are involved in multiple biological processes as precursors of membrane lipids and lipid mediators. This is Very-long-chain (3R)-3-hydroxyacyl-CoA dehydratase 4 from Homo sapiens (Human).